A 111-amino-acid polypeptide reads, in one-letter code: UPF0060 membrane protein HCH_03337 (111 aa).

4 consecutive transmembrane segments (helical) span residues 8 to 28 (LLFA…WLVI), 33 to 53 (SLWL…LLTL), 65 to 85 (YGGM…GVGL), and 88 to 108 (FDFL…LQPI).

This sequence belongs to the UPF0060 family.

It localises to the cell inner membrane. This chain is UPF0060 membrane protein HCH_03337, found in Hahella chejuensis (strain KCTC 2396).